The chain runs to 266 residues: Ribosomal RNA small subunit methyltransferase A (266 aa).

Positions 11, 13, 37, 57, 85, and 104 each coordinate S-adenosyl-L-methionine.

The protein belongs to the class I-like SAM-binding methyltransferase superfamily. rRNA adenine N(6)-methyltransferase family. RsmA subfamily.

It is found in the cytoplasm. It catalyses the reaction adenosine(1518)/adenosine(1519) in 16S rRNA + 4 S-adenosyl-L-methionine = N(6)-dimethyladenosine(1518)/N(6)-dimethyladenosine(1519) in 16S rRNA + 4 S-adenosyl-L-homocysteine + 4 H(+). Its function is as follows. Specifically dimethylates two adjacent adenosines (A1518 and A1519) in the loop of a conserved hairpin near the 3'-end of 16S rRNA in the 30S particle. May play a critical role in biogenesis of 30S subunits. The polypeptide is Ribosomal RNA small subunit methyltransferase A (Campylobacter jejuni (strain RM1221)).